A 98-amino-acid polypeptide reads, in one-letter code: NADH-ubiquinone oxidoreductase chain 4L (98 aa).

Helical transmembrane passes span 1–21 (MSLTYMNMFMAFTISLLGLLM), 29–49 (SLLCLEGMMLSLFVMMTMAIL), and 61–81 (IILLVFAACEAALGLSLLVMV).

The protein belongs to the complex I subunit 4L family. As to quaternary structure, core subunit of respiratory chain NADH dehydrogenase (Complex I) which is composed of 45 different subunits.

The protein localises to the mitochondrion inner membrane. The enzyme catalyses a ubiquinone + NADH + 5 H(+)(in) = a ubiquinol + NAD(+) + 4 H(+)(out). In terms of biological role, core subunit of the mitochondrial membrane respiratory chain NADH dehydrogenase (Complex I) which catalyzes electron transfer from NADH through the respiratory chain, using ubiquinone as an electron acceptor. Part of the enzyme membrane arm which is embedded in the lipid bilayer and involved in proton translocation. The protein is NADH-ubiquinone oxidoreductase chain 4L (MT-ND4L) of Vampyressa melissa (Melissa's yellow-eared bat).